We begin with the raw amino-acid sequence, 123 residues long: Intracellular iron chaperone frataxin (123 aa).

As to quaternary structure, homodimer, upon Fe(2+) binding. Interacts with the SufS/SufU complex. Interacts with CpfC. It depends on Fe(2+) as a cofactor.

The protein localises to the cytoplasm. Functionally, plays an essential role in iron intracellular trafficking to iron cofactor biogenesis systems including iron-sulfur cluster (Fe-S) or heme assembly. Promotes the biosynthesis of iron-sulfur clusters by delivering Fe to the complex composed of the cysteine desulfurase SufS and the zinc-dependent sulfurtransferase SufU. Also plays a critical role in coproporphyrin-dependent heme b biogenesis and thus provides an essential function for the bacterial global metabolism. The chain is Intracellular iron chaperone frataxin (fra) from Bacillus subtilis (strain 168).